The chain runs to 329 residues: Cathepsin K (329 aa).

The signal sequence occupies residues 1-15 (MWVFKFLLLPMVSFA). A propeptide spans 16 to 114 (LSPEEMLDTQ…TLYTPEWEGR (99 aa)) (activation peptide). N-linked (GlcNAc...) asparagine glycosylation is present at asparagine 103. 2 disulfides stabilise this stretch: cysteine 136-cysteine 177 and cysteine 170-cysteine 210. Residue cysteine 139 is part of the active site. Asparagine 213 is a glycosylation site (N-linked (GlcNAc...) asparagine). A disulfide bridge links cysteine 269 with cysteine 318. Catalysis depends on residues histidine 276 and asparagine 296.

The protein belongs to the peptidase C1 family. As to expression, predominantly expressed in bones. Expressed in thyroid epithelial cells.

Its subcellular location is the lysosome. It is found in the secreted. The protein resides in the apical cell membrane. The enzyme catalyses Broad proteolytic activity. With small-molecule substrates and inhibitors, the major determinant of specificity is P2, which is preferably Leu, Met &gt; Phe, and not Arg.. Thiol protease involved in osteoclastic bone resorption. Displays potent endoprotease activity against fibrinogen at acid pH. May play an important role in extracellular matrix degradation. Involved in the release of thyroid hormone thyroxine (T4) by limited proteolysis of TG/thyroglobulin in the thyroid follicle lumen. The protein is Cathepsin K (Ctsk) of Mus musculus (Mouse).